The chain runs to 321 residues: Annexin A5 (321 aa).

Alanine 2 bears the N-acetylalanine mark. Annexin repeat units lie at residues 15-86 (FDER…ALMK), 87-158 (PSRL…VLLQ), 170-242 (AQVE…AVVK), and 246-317 (SIPA…LLCG). Residue lysine 29 forms a Glycyl lysine isopeptide (Lys-Gly) (interchain with G-Cter in SUMO1); alternate linkage. A Glycyl lysine isopeptide (Lys-Gly) (interchain with G-Cter in SUMO2); alternate cross-link involves residue lysine 29. An N6-acetyllysine mark is found at lysine 70, lysine 76, lysine 79, lysine 97, and lysine 101. Lysine 290 is subject to N6-succinyllysine. The short motif at 314 to 320 (LLCGGED) is the [IL]-x-C-x-x-[DE] motif element.

Belongs to the annexin family. Monomer. Binds ATRX and EIF5B. Post-translationally, S-nitrosylation is induced by interferon-gamma and oxidatively-modified low-densitity lipoprotein (LDL(ox)) possibly implicating the iNOS-S100A8/9 transnitrosylase complex.

This protein is an anticoagulant protein that acts as an indirect inhibitor of the thromboplastin-specific complex, which is involved in the blood coagulation cascade. The chain is Annexin A5 (ANXA5) from Bos taurus (Bovine).